The primary structure comprises 289 residues: Phosphatidylserine decarboxylase proenzyme (289 aa).

Catalysis depends on charge relay system; for autoendoproteolytic cleavage activity residues aspartate 89, histidine 146, and serine 252. The Schiff-base intermediate with substrate; via pyruvic acid; for decarboxylase activity role is filled by serine 252. Serine 252 carries the post-translational modification Pyruvic acid (Ser); by autocatalysis.

The protein belongs to the phosphatidylserine decarboxylase family. PSD-B subfamily. Prokaryotic type I sub-subfamily. As to quaternary structure, heterodimer of a large membrane-associated beta subunit and a small pyruvoyl-containing alpha subunit. Requires pyruvate as cofactor. Post-translationally, is synthesized initially as an inactive proenzyme. Formation of the active enzyme involves a self-maturation process in which the active site pyruvoyl group is generated from an internal serine residue via an autocatalytic post-translational modification. Two non-identical subunits are generated from the proenzyme in this reaction, and the pyruvate is formed at the N-terminus of the alpha chain, which is derived from the carboxyl end of the proenzyme. The autoendoproteolytic cleavage occurs by a canonical serine protease mechanism, in which the side chain hydroxyl group of the serine supplies its oxygen atom to form the C-terminus of the beta chain, while the remainder of the serine residue undergoes an oxidative deamination to produce ammonia and the pyruvoyl prosthetic group on the alpha chain. During this reaction, the Ser that is part of the protease active site of the proenzyme becomes the pyruvoyl prosthetic group, which constitutes an essential element of the active site of the mature decarboxylase.

The protein localises to the cell membrane. It carries out the reaction a 1,2-diacyl-sn-glycero-3-phospho-L-serine + H(+) = a 1,2-diacyl-sn-glycero-3-phosphoethanolamine + CO2. The protein operates within phospholipid metabolism; phosphatidylethanolamine biosynthesis; phosphatidylethanolamine from CDP-diacylglycerol: step 2/2. In terms of biological role, catalyzes the formation of phosphatidylethanolamine (PtdEtn) from phosphatidylserine (PtdSer). The polypeptide is Phosphatidylserine decarboxylase proenzyme (Shewanella sp. (strain W3-18-1)).